A 41-amino-acid polypeptide reads, in one-letter code: uncharacterized protein (41 aa).

Its subcellular location is the plastid. The protein resides in the chloroplast. This is an uncharacterized protein from Trieres chinensis (Marine centric diatom).